A 413-amino-acid chain; its full sequence is Variant surface glycoprotein YnAT 1.3 (413 aa).

An N-terminal signal peptide occupies residues 1–22 (MLDNSRARSIVHLLILLKAHVI). N-linked (GlcNAc...) asparagine glycans are attached at residues Asn-91, Asn-361, and Asn-379. Asn-379 carries GPI-anchor amidated asparagine lipidation. A propeptide spans 380-413 (SSNPTSRQNSVVQEPTTVSAAAITPLILPWTLLI) (removed in mature form).

It localises to the cell membrane. In terms of biological role, VSG forms a coat on the surface of the parasite. The trypanosome evades the immune response of the host by expressing a series of antigenically distinct VSGs from an estimated 1000 VSG genes. The sequence is that of Variant surface glycoprotein YnAT 1.3 from Trypanosoma congolense.